The primary structure comprises 224 residues: Putative adhesin RF_1314 (224 aa).

Residues Met-1–Ala-22 form the signal peptide.

This chain is Putative adhesin RF_1314, found in Rickettsia felis (strain ATCC VR-1525 / URRWXCal2) (Rickettsia azadi).